Consider the following 1207-residue polypeptide: DNA-directed RNA polymerase subunit beta' (1207 aa).

Zn(2+) contacts are provided by Cys-60, Cys-62, Cys-75, and Cys-78. Mg(2+) contacts are provided by Asp-449, Asp-451, and Asp-453. Positions 822, 896, 903, and 906 each coordinate Zn(2+).

The protein belongs to the RNA polymerase beta' chain family. In terms of assembly, the RNAP catalytic core consists of 2 alpha, 1 beta, 1 beta' and 1 omega subunit. When a sigma factor is associated with the core the holoenzyme is formed, which can initiate transcription. Requires Mg(2+) as cofactor. Zn(2+) is required as a cofactor.

The enzyme catalyses RNA(n) + a ribonucleoside 5'-triphosphate = RNA(n+1) + diphosphate. Functionally, DNA-dependent RNA polymerase catalyzes the transcription of DNA into RNA using the four ribonucleoside triphosphates as substrates. The protein is DNA-directed RNA polymerase subunit beta' of Staphylococcus aureus (strain MRSA252).